A 151-amino-acid polypeptide reads, in one-letter code: uncharacterized protein (151 aa).

The tract at residues 1–48 is disordered; it reads MRMAPTESTEGRRLWPGPREGGSGKETTSEKLSNLPRPHSYSPKRADA.

This is an uncharacterized protein from Homo sapiens (Human).